We begin with the raw amino-acid sequence, 185 residues long: Ribosome-recycling factor (185 aa).

This sequence belongs to the RRF family.

It is found in the cytoplasm. Responsible for the release of ribosomes from messenger RNA at the termination of protein biosynthesis. May increase the efficiency of translation by recycling ribosomes from one round of translation to another. The polypeptide is Ribosome-recycling factor (Shewanella amazonensis (strain ATCC BAA-1098 / SB2B)).